The primary structure comprises 158 residues: Small ribosomal subunit protein uS19 (158 aa).

This sequence belongs to the universal ribosomal protein uS19 family.

Its function is as follows. Protein S19 forms a complex with S13 that binds strongly to the 16S ribosomal RNA. This is Small ribosomal subunit protein uS19 from Pyrobaculum aerophilum (strain ATCC 51768 / DSM 7523 / JCM 9630 / CIP 104966 / NBRC 100827 / IM2).